The sequence spans 113 residues: Large ribosomal subunit protein uL22 (113 aa).

This sequence belongs to the universal ribosomal protein uL22 family. As to quaternary structure, part of the 50S ribosomal subunit.

Functionally, this protein binds specifically to 23S rRNA; its binding is stimulated by other ribosomal proteins, e.g. L4, L17, and L20. It is important during the early stages of 50S assembly. It makes multiple contacts with different domains of the 23S rRNA in the assembled 50S subunit and ribosome. The globular domain of the protein is located near the polypeptide exit tunnel on the outside of the subunit, while an extended beta-hairpin is found that lines the wall of the exit tunnel in the center of the 70S ribosome. The chain is Large ribosomal subunit protein uL22 from Bacillus thuringiensis subsp. konkukian (strain 97-27).